The following is a 248-amino-acid chain: CKLF-like MARVEL transmembrane domain-containing protein 2 (248 aa).

Residues 1–63 (MAPKAAKGAK…KAVQPKHEVG (63 aa)) are disordered. Pro residues predominate over residues 12 to 22 (EPAPAPPPPGA). Residues 23–63 (KPEEDKKDGKEPSDKPQKAVQDHKEPSDKPQKAVQPKHEVG) are compositionally biased toward basic and acidic residues. In terms of domain architecture, MARVEL spans 82–204 (FWLLGHAEIK…DVCLQRNHFR (123 aa)). Helical transmembrane passes span 116-136 (LIIT…SFAI), 147-167 (ISDL…VVFA), and 178-198 (YLLA…DVCL). Residues 208–248 (AKKHMLVPPPGKEKGPQQGKGPEPAKPPEPGKPPGPAKGKK) form a disordered region. Over residues 231–248 (PAKPPEPGKPPGPAKGKK) the composition is skewed to pro residues.

The protein belongs to the chemokine-like factor family. Highly expressed in testis.

Its subcellular location is the membrane. This is CKLF-like MARVEL transmembrane domain-containing protein 2 (CMTM2) from Homo sapiens (Human).